Here is a 354-residue protein sequence, read N- to C-terminus: Uroporphyrinogen decarboxylase (354 aa).

Residues 27–31 (RRAGR), Phe46, Asp77, Tyr154, Thr209, and His327 contribute to the substrate site.

This sequence belongs to the uroporphyrinogen decarboxylase family. Homodimer.

The protein resides in the cytoplasm. The enzyme catalyses uroporphyrinogen III + 4 H(+) = coproporphyrinogen III + 4 CO2. Its pathway is porphyrin-containing compound metabolism; protoporphyrin-IX biosynthesis; coproporphyrinogen-III from 5-aminolevulinate: step 4/4. Its function is as follows. Catalyzes the decarboxylation of four acetate groups of uroporphyrinogen-III to yield coproporphyrinogen-III. In Salmonella typhimurium (strain LT2 / SGSC1412 / ATCC 700720), this protein is Uroporphyrinogen decarboxylase.